Here is a 540-residue protein sequence, read N- to C-terminus: Chaperonin GroEL (540 aa).

Residues 29–32 (TLGP), 86–90 (DGTTT), Gly-413, 477–479 (DAL), and Asp-493 each bind ATP.

The protein belongs to the chaperonin (HSP60) family. In terms of assembly, forms a cylinder of 14 subunits composed of two heptameric rings stacked back-to-back. Interacts with the co-chaperonin GroES.

It is found in the cytoplasm. The catalysed reaction is ATP + H2O + a folded polypeptide = ADP + phosphate + an unfolded polypeptide.. In terms of biological role, together with its co-chaperonin GroES, plays an essential role in assisting protein folding. The GroEL-GroES system forms a nano-cage that allows encapsulation of the non-native substrate proteins and provides a physical environment optimized to promote and accelerate protein folding. The polypeptide is Chaperonin GroEL (Clostridium botulinum (strain Eklund 17B / Type B)).